The following is a 90-amino-acid chain: Cell division topological specificity factor (90 aa).

This sequence belongs to the MinE family.

Functionally, prevents the cell division inhibition by proteins MinC and MinD at internal division sites while permitting inhibition at polar sites. This ensures cell division at the proper site by restricting the formation of a division septum at the midpoint of the long axis of the cell. This Clostridium perfringens (strain ATCC 13124 / DSM 756 / JCM 1290 / NCIMB 6125 / NCTC 8237 / Type A) protein is Cell division topological specificity factor.